The primary structure comprises 106 residues: BLOC-1-related complex subunit 7 (106 aa).

Belongs to the BORCS7 family. Component of the BLOC-one-related complex (BORC) which is composed of BLOC1S1, BLOC1S2, BORCS5, BORCS6, BORCS7, BORCS8, KXD1 and SNAPIN.

Its subcellular location is the lysosome membrane. Functionally, as part of the BORC complex may play a role in lysosomes movement and localization at the cell periphery. Associated with the cytosolic face of lysosomes, the BORC complex may recruit ARL8B and couple lysosomes to microtubule plus-end-directed kinesin motor. This is BLOC-1-related complex subunit 7 from Pongo abelii (Sumatran orangutan).